The following is a 228-amino-acid chain: Putative elongation factor Tu-like protein (228 aa).

The region spanning 6 to 212 is the tr-type G domain; the sequence is KPHINVGTIG…LPIREKDNPF (207 aa). Residues 15-22 form a G1 region; the sequence is GHVDHGKT. Residues 59 to 63 are G2; it reads GITIS. Positions 80–83 are G3; that stretch reads DCPG. Residues 135-138 are G4; that stretch reads NKCD. The G5 stretch occupies residues 173 to 175; sequence SAV.

Belongs to the TRAFAC class translation factor GTPase superfamily. Classic translation factor GTPase family. EF-Tu/EF-1A subfamily.

The chain is Putative elongation factor Tu-like protein from Ehrlichia ruminantium (strain Welgevonden).